Here is a 1089-residue protein sequence, read N- to C-terminus: Protein phosphatase 1 regulatory subunit 3A (1089 aa).

Residues 32-57 form a disordered region; that stretch reads KATFKPGFSPQPSRRGSGSSEDMYLD. Over residues 37–51 the composition is skewed to low complexity; the sequence is PGFSPQPSRRGSGSS. S40 and S44 each carry phosphoserine; by GSK3. Residues S48 and S51 each carry the phosphoserine modification. Residue T58 is modified to Phosphothreonine. Positions 64–67 match the PP1-binding motif motif; it reads RRVS. Phosphoserine; by PKA is present on S67. Residues 123 to 231 form the CBM21 domain; the sequence is EQLQVQKAVL…NNNGTNYILV (109 aa). Disordered stretches follow at residues 385–420, 479–501, and 566–649; these read FYHS…GDTS, HGDS…KVDN, and PCPS…SDIA. Residues 581–600 show a composition bias toward polar residues; it reads SGSNLEPGTSDLSSPRNFSP. Basic and acidic residues predominate over residues 602-614; it reads TDDHLFQADRENS. Residues 615 to 625 show a composition bias toward polar residues; the sequence is DSSNPENQNMN. At S821 the chain carries Phosphoserine. A disordered region spans residues 949 to 968; it reads IMKSGSGGERGGGPILQQKE. Gly residues predominate over residues 953–962; the sequence is GSGGERGGGP. Residues 1047–1067 traverse the membrane as a helical segment; it reads LLFLIFLATVYYYDLMIGLAF.

In terms of assembly, interacts with PPP1CC catalytic subunit of PP1, and associates with glycogen. In terms of processing, phosphorylation at Ser-48 by ISPK stimulates the dephosphorylation of glycogen synthase and phosphorylase kinase. As to expression, skeletal muscle and heart.

The protein localises to the membrane. Functionally, seems to act as a glycogen-targeting subunit for PP1. PP1 is essential for cell division, and participates in the regulation of glycogen metabolism, muscle contractility and protein synthesis. Plays an important role in glycogen synthesis but is not essential for insulin activation of glycogen synthase. This chain is Protein phosphatase 1 regulatory subunit 3A (Ppp1r3a), found in Mus musculus (Mouse).